A 367-amino-acid polypeptide reads, in one-letter code: tRNA-specific 2-thiouridylase MnmA (367 aa).

ATP contacts are provided by residues 12–19 (GMSGGVDS) and M38. Residues 98–100 (NPD) form an interaction with target base in tRNA region. Residue C103 is the Nucleophile of the active site. C103 and C200 form a disulfide bridge. Position 128 (G128) interacts with ATP. An interaction with tRNA region spans residues 150–152 (KDQ). The active-site Cysteine persulfide intermediate is the C200. The interaction with tRNA stretch occupies residues 312–313 (RY).

The protein belongs to the MnmA/TRMU family. As to quaternary structure, interacts with TusE.

The protein localises to the cytoplasm. The catalysed reaction is S-sulfanyl-L-cysteinyl-[protein] + uridine(34) in tRNA + AH2 + ATP = 2-thiouridine(34) in tRNA + L-cysteinyl-[protein] + A + AMP + diphosphate + H(+). Functionally, catalyzes the 2-thiolation of uridine at the wobble position (U34) of tRNA(Lys), tRNA(Glu) and tRNA(Gln), leading to the formation of s(2)U34, the first step of tRNA-mnm(5)s(2)U34 synthesis. Sulfur is provided by IscS, via a sulfur-relay system. Binds ATP and its substrate tRNAs. In Proteus mirabilis (strain HI4320), this protein is tRNA-specific 2-thiouridylase MnmA.